Reading from the N-terminus, the 322-residue chain is Phosphoenolpyruvate transferase (322 aa).

A 7,8-didemethyl-8-hydroxy-5-deazariboflavin-binding site is contributed by aspartate 58.

This sequence belongs to the CofD family. In terms of assembly, homodimer. It depends on Mg(2+) as a cofactor.

It carries out the reaction enolpyruvoyl-2-diphospho-5'-guanosine + 7,8-didemethyl-8-hydroxy-5-deazariboflavin = dehydro coenzyme F420-0 + GMP + H(+). Its pathway is cofactor biosynthesis; coenzyme F420 biosynthesis. In terms of biological role, catalyzes the transfer of the phosphoenolpyruvate moiety from enoylpyruvoyl-2-diphospho-5'-guanosine (EPPG) to 7,8-didemethyl-8-hydroxy-5-deazariboflavin (FO) with the formation of dehydro coenzyme F420-0 and GMP. This Thermobifida fusca (strain YX) protein is Phosphoenolpyruvate transferase.